The primary structure comprises 601 residues: ATP-dependent RNA helicase DeaD (601 aa).

The Q motif signature appears at 6-34; that stretch reads STFSFLGLNPFIIKSLSKMGYVKPSPIQA. The 172-residue stretch at 37–208 folds into the Helicase ATP-binding domain; sequence IPLLLEGRDV…KRFMKNPQEI (172 aa). 50–57 is a binding site for ATP; sequence AQTGSGKT. The DEAD box motif lies at 156–159; it reads DEAD. The Helicase C-terminal domain maps to 231–378; sequence KTDALIRFLE…EVQLPKIEVL (148 aa). The span at 564 to 581 shows a compositional bias: basic and acidic residues; it reads SIFNKDKNNKRRFSDNRL. Residues 564–601 are disordered; it reads SIFNKDKNNKRRFSDNRLNKSSSIKNETKSSFFRRKSV. A compositionally biased stretch (polar residues) spans 582-594; that stretch reads NKSSSIKNETKSS.

The protein belongs to the DEAD box helicase family. DeaD/CsdA subfamily.

The protein resides in the cytoplasm. The catalysed reaction is ATP + H2O = ADP + phosphate + H(+). In terms of biological role, DEAD-box RNA helicase involved in various cellular processes at low temperature, including ribosome biogenesis, mRNA degradation and translation initiation. This Buchnera aphidicola subsp. Schizaphis graminum (strain Sg) protein is ATP-dependent RNA helicase DeaD.